The sequence spans 96 residues: Putative regulatory protein DET0036 (96 aa).

It belongs to the RemA family.

This Dehalococcoides mccartyi (strain ATCC BAA-2266 / KCTC 15142 / 195) (Dehalococcoides ethenogenes (strain 195)) protein is Putative regulatory protein DET0036.